A 341-amino-acid polypeptide reads, in one-letter code: Phosphate acyltransferase (341 aa).

It belongs to the PlsX family. As to quaternary structure, homodimer. Probably interacts with PlsY.

It is found in the cytoplasm. The enzyme catalyses a fatty acyl-[ACP] + phosphate = an acyl phosphate + holo-[ACP]. It functions in the pathway lipid metabolism; phospholipid metabolism. Functionally, catalyzes the reversible formation of acyl-phosphate (acyl-PO(4)) from acyl-[acyl-carrier-protein] (acyl-ACP). This enzyme utilizes acyl-ACP as fatty acyl donor, but not acyl-CoA. The protein is Phosphate acyltransferase of Vibrio vulnificus (strain CMCP6).